A 304-amino-acid polypeptide reads, in one-letter code: 33 kDa chaperonin (304 aa).

2 disulfide bridges follow: cysteine 245/cysteine 247 and cysteine 278/cysteine 281.

It belongs to the HSP33 family. In terms of processing, under oxidizing conditions two disulfide bonds are formed involving the reactive cysteines. Under reducing conditions zinc is bound to the reactive cysteines and the protein is inactive.

The protein resides in the cytoplasm. Redox regulated molecular chaperone. Protects both thermally unfolding and oxidatively damaged proteins from irreversible aggregation. Plays an important role in the bacterial defense system toward oxidative stress. This Microcystis aeruginosa (strain NIES-843 / IAM M-2473) protein is 33 kDa chaperonin.